The chain runs to 402 residues: 8-amino-7-oxononanoate synthase (402 aa).

Arginine 26 provides a ligand contact to substrate. Position 114–115 (114–115 (GY)) interacts with pyridoxal 5'-phosphate. Histidine 139 is a binding site for substrate. Pyridoxal 5'-phosphate-binding residues include serine 182, histidine 210, and threonine 239. Lysine 242 bears the N6-(pyridoxal phosphate)lysine mark. Threonine 359 provides a ligand contact to substrate.

It belongs to the class-II pyridoxal-phosphate-dependent aminotransferase family. BioF subfamily. As to quaternary structure, homodimer. It depends on pyridoxal 5'-phosphate as a cofactor.

The catalysed reaction is 6-carboxyhexanoyl-[ACP] + L-alanine + H(+) = (8S)-8-amino-7-oxononanoate + holo-[ACP] + CO2. It participates in cofactor biosynthesis; biotin biosynthesis. Its function is as follows. Catalyzes the decarboxylative condensation of pimeloyl-[acyl-carrier protein] and L-alanine to produce 8-amino-7-oxononanoate (AON), [acyl-carrier protein], and carbon dioxide. The protein is 8-amino-7-oxononanoate synthase of Halorhodospira halophila (strain DSM 244 / SL1) (Ectothiorhodospira halophila (strain DSM 244 / SL1)).